A 256-amino-acid polypeptide reads, in one-letter code: GTP cyclohydrolase FolE2 (256 aa).

This sequence belongs to the GTP cyclohydrolase IV family.

The catalysed reaction is GTP + H2O = 7,8-dihydroneopterin 3'-triphosphate + formate + H(+). It participates in cofactor biosynthesis; 7,8-dihydroneopterin triphosphate biosynthesis; 7,8-dihydroneopterin triphosphate from GTP: step 1/1. In terms of biological role, converts GTP to 7,8-dihydroneopterin triphosphate. In Caldicellulosiruptor bescii (strain ATCC BAA-1888 / DSM 6725 / KCTC 15123 / Z-1320) (Anaerocellum thermophilum), this protein is GTP cyclohydrolase FolE2.